Here is a 537-residue protein sequence, read N- to C-terminus: CTP synthase (537 aa).

The interval 1–269 (MNQTKYIFVT…DKVALKKLDL (269 aa)) is amidoligase domain. Position 15 (serine 15) interacts with CTP. Serine 15 is a binding site for UTP. 16-21 (SLGKGI) is an ATP binding site. L-glutamine is bound at residue tyrosine 56. An ATP-binding site is contributed by aspartate 73. Mg(2+) contacts are provided by aspartate 73 and glutamate 143. CTP contacts are provided by residues 150–152 (DIE), 190–195 (KTKPTQ), and lysine 226. Residues 190 to 195 (KTKPTQ) and lysine 226 contribute to the UTP site. The 243-residue stretch at 295–537 (SIGLVGKYVE…IAAAVKHKNK (243 aa)) folds into the Glutamine amidotransferase type-1 domain. Glycine 357 contributes to the L-glutamine binding site. The active-site Nucleophile; for glutamine hydrolysis is cysteine 384. Residues 385 to 388 (LGMQ), glutamate 408, and arginine 465 contribute to the L-glutamine site. Residues histidine 510 and glutamate 512 contribute to the active site.

This sequence belongs to the CTP synthase family. As to quaternary structure, homotetramer.

It catalyses the reaction UTP + L-glutamine + ATP + H2O = CTP + L-glutamate + ADP + phosphate + 2 H(+). It carries out the reaction L-glutamine + H2O = L-glutamate + NH4(+). The enzyme catalyses UTP + NH4(+) + ATP = CTP + ADP + phosphate + 2 H(+). The protein operates within pyrimidine metabolism; CTP biosynthesis via de novo pathway; CTP from UDP: step 2/2. With respect to regulation, allosterically activated by GTP, when glutamine is the substrate; GTP has no effect on the reaction when ammonia is the substrate. The allosteric effector GTP functions by stabilizing the protein conformation that binds the tetrahedral intermediate(s) formed during glutamine hydrolysis. Inhibited by the product CTP, via allosteric rather than competitive inhibition. Functionally, catalyzes the ATP-dependent amination of UTP to CTP with either L-glutamine or ammonia as the source of nitrogen. Regulates intracellular CTP levels through interactions with the four ribonucleotide triphosphates. The protein is CTP synthase of Flavobacterium psychrophilum (strain ATCC 49511 / DSM 21280 / CIP 103535 / JIP02/86).